We begin with the raw amino-acid sequence, 178 residues long: Large ribosomal subunit protein uL6 (178 aa).

The protein belongs to the universal ribosomal protein uL6 family. As to quaternary structure, part of the 50S ribosomal subunit.

This protein binds to the 23S rRNA, and is important in its secondary structure. It is located near the subunit interface in the base of the L7/L12 stalk, and near the tRNA binding site of the peptidyltransferase center. This is Large ribosomal subunit protein uL6 from Aliarcobacter butzleri (strain RM4018) (Arcobacter butzleri).